The sequence spans 128 residues: Large-conductance mechanosensitive channel (128 aa).

The next 2 membrane-spanning stretches (helical) occupy residues 11-31 (FALK…AAFG) and 70-90 (GAFI…FIFV).

It belongs to the MscL family. Homopentamer.

Its subcellular location is the cell membrane. In terms of biological role, channel that opens in response to stretch forces in the membrane lipid bilayer. May participate in the regulation of osmotic pressure changes within the cell. This Listeria monocytogenes serotype 4b (strain CLIP80459) protein is Large-conductance mechanosensitive channel.